A 428-amino-acid polypeptide reads, in one-letter code: E3 ubiquitin-protein ligase RNF128 (428 aa).

The first 38 residues, 1–38 (MGPPPGIGVYCRGGCGAARLLAWCFLLALSPHAPGSRG), serve as a signal peptide directing secretion. Residues asparagine 48, asparagine 59, and asparagine 101 are each glycosylated (N-linked (GlcNAc...) asparagine). Residues 75-183 (SPLEPVSGVL…LKGTKILQSI (109 aa)) form the PA domain. Residues 208–228 (IFFVSVSFFIITAATVGYFIF) form a helical membrane-spanning segment. Residues 277 to 318 (CAVCIELYKPNDLVRILTCNHIFHKTCVDPWLLEHRTCPMCK) form an RING-type; atypical zinc finger. A compositionally biased stretch (polar residues) spans 342-351 (VSNEASNTAS). The tract at residues 342–428 (VSNEASNTAS…QEAAVREIKS (87 aa)) is disordered.

Auto-ubiquitinated. Controls the development of T-cell clonal anergy by ubiquitination. Expressed in brain, kidney, heart, liver, ovary, testis and thymus. Expression increased as early as 4 hours by 5- to 7-fold in anergized cultures as compared to resting or activated cells.

It localises to the cytoplasm. The protein resides in the endomembrane system. It is found in the cytoskeleton. Its subcellular location is the perinuclear region. It catalyses the reaction S-ubiquitinyl-[E2 ubiquitin-conjugating enzyme]-L-cysteine + [acceptor protein]-L-lysine = [E2 ubiquitin-conjugating enzyme]-L-cysteine + N(6)-ubiquitinyl-[acceptor protein]-L-lysine.. It participates in protein modification; protein ubiquitination. E3 ubiquitin-protein ligase that catalyzes 'Lys-27', 'Lys-48'- or 'Lys-63'-linked polyubiquitin chains formation and plays a role in different biological processes such as modulation of immune response, cytoskeletal dynamics or protein homeostasis. Inhibits IL2 and IL4 transcription, thereby playing an important role in the induction of the anergic phenotype, a long-term stable state of T-lymphocyte unresponsiveness to antigenic stimulation associated with the blockade of interleukin production. Ubiquitinates ARPC5 with 'Lys-48' linkages and COR1A with 'Lys-63' linkages leading to their degradation, down-regulation of these cytoskeletal components results in impaired lamellipodium formation and reduced accumulation of F-actin at the immunological synapse. Functions in the patterning of the dorsal ectoderm; sensitizes ectoderm to respond to neural-inducing signals. Plays a positive role in innate immune response by promoting 'Lys-63'-linked ubiquitination of TBK1 after RNA- or DNA-virus infection. Regulates alveolar macrophage activation and neutrophil infiltration by interacting with TLR4, targeting it for degradation, and inhibiting NF-kappa-B activation, hence decreasing pro-inflammatory cytokines. Negatively regulates the IL-3/STAT5 signaling pathway by facilitating 'Lys-27'-linked polyubiquitination of IL3RA leading to its degradation via lysosomal pathway. Directly regulates the N-glycosylation process in the endoplasmic reticulum by targeting the glycosyl-transferase RPN1 for ubiquitination and degradation. Other substrates targeted for degradation by RNF128 include transmembrane proteins CD40L, CD83 or the tetraspanin CD151. This Mus musculus (Mouse) protein is E3 ubiquitin-protein ligase RNF128 (Rnf128).